Here is a 180-residue protein sequence, read N- to C-terminus: Kappa-casein (180 aa).

A signal peptide spans M1–A21. Residues T132, T142, T147, and T153 are each glycosylated (O-linked (GalNAc...) threonine). S160 carries the phosphoserine; alternate modification. S160 carries an O-linked (GalNAc...) serine; alternate glycan.

The protein belongs to the kappa-casein family. Mammary gland specific. Secreted in milk.

Its subcellular location is the secreted. Its function is as follows. Kappa-casein stabilizes micelle formation, preventing casein precipitation in milk. This chain is Kappa-casein (CSN3), found in Oryctolagus cuniculus (Rabbit).